The following is a 504-amino-acid chain: Xylose import ATP-binding protein XylG (504 aa).

ABC transporter domains follow at residues leucine 6–glutamate 243 and valine 262–lysine 504. Position 38-45 (glycine 38–serine 45) interacts with ATP.

The protein belongs to the ABC transporter superfamily. Xylose importer (TC 3.A.1.2.4) family. As to quaternary structure, the complex is composed of two ATP-binding proteins (XylG), two transmembrane proteins (XylH) and a solute-binding protein (XylF).

It is found in the cell membrane. The catalysed reaction is D-xylose(out) + ATP + H2O = D-xylose(in) + ADP + phosphate + H(+). In terms of biological role, part of the ABC transporter complex XylFGH involved in xylose import. Responsible for energy coupling to the transport system. The polypeptide is Xylose import ATP-binding protein XylG (Moorella thermoacetica (strain ATCC 39073 / JCM 9320)).